We begin with the raw amino-acid sequence, 646 residues long: Threonine--tRNA ligase (646 aa).

The 63-residue stretch at 1–63 (MAQISLTFPD…ETDAKIAIHT (63 aa)) folds into the TGS domain. Residues 247–544 (DHRKLGREME…LIENYAGKLP (298 aa)) are catalytic. Zn(2+) is bound by residues cysteine 344, histidine 395, and histidine 521.

Belongs to the class-II aminoacyl-tRNA synthetase family. Homodimer. Zn(2+) is required as a cofactor.

The protein resides in the cytoplasm. The catalysed reaction is tRNA(Thr) + L-threonine + ATP = L-threonyl-tRNA(Thr) + AMP + diphosphate + H(+). Functionally, catalyzes the attachment of threonine to tRNA(Thr) in a two-step reaction: L-threonine is first activated by ATP to form Thr-AMP and then transferred to the acceptor end of tRNA(Thr). Also edits incorrectly charged L-seryl-tRNA(Thr). The protein is Threonine--tRNA ligase of Cereibacter sphaeroides (strain ATCC 17029 / ATH 2.4.9) (Rhodobacter sphaeroides).